The primary structure comprises 210 residues: Cdc42 effector protein 2 (210 aa).

The residue at position 2 (serine 2) is an N-acetylserine. The 15-residue stretch at 30–44 (ISPPLGDFRHTIHIG) folds into the CRIB domain. Phosphoserine is present on residues serine 31, serine 101, and serine 141. Residues 124 to 145 (AQAPPKPPRLHLETPQASPQEA) are disordered.

It belongs to the BORG/CEP family. Interacts with CDC42 and RHOQ, in a GTP-dependent manner, and with SEPT7.

It is found in the endomembrane system. It localises to the cytoplasm. The protein resides in the cytoskeleton. Its function is as follows. Probably involved in the organization of the actin cytoskeleton. May act downstream of CDC42 to induce actin filament assembly leading to cell shape changes. Induces pseudopodia formation in fibroblasts in a CDC42-dependent manner. In Bos taurus (Bovine), this protein is Cdc42 effector protein 2 (CDC42EP2).